Consider the following 461-residue polypeptide: Cysteine--tRNA ligase (461 aa).

Cys30 serves as a coordination point for Zn(2+). The short motif at 32–42 is the 'HIGH' region element; that stretch reads VTVYDLCHIGH. Cys211, His236, and Glu240 together coordinate Zn(2+). The 'KMSKS' region motif lies at 268–272; the sequence is KMSKS. Residue Lys271 participates in ATP binding.

Belongs to the class-I aminoacyl-tRNA synthetase family. As to quaternary structure, monomer. Requires Zn(2+) as cofactor.

It is found in the cytoplasm. It carries out the reaction tRNA(Cys) + L-cysteine + ATP = L-cysteinyl-tRNA(Cys) + AMP + diphosphate. This chain is Cysteine--tRNA ligase, found in Shewanella sp. (strain ANA-3).